The sequence spans 89 residues: MKVKPLGERLLIKPIIEEKKTAGGIVLPDAAKEKPMKAEIVEVGKLPEDCQLKVGDKVIYNKYSGTEIKIDDEDYIIIDVSDILAKIEE.

It belongs to the GroES chaperonin family. Heptamer of 7 subunits arranged in a ring. Interacts with the chaperonin GroEL.

Its subcellular location is the cytoplasm. Functionally, together with the chaperonin GroEL, plays an essential role in assisting protein folding. The GroEL-GroES system forms a nano-cage that allows encapsulation of the non-native substrate proteins and provides a physical environment optimized to promote and accelerate protein folding. GroES binds to the apical surface of the GroEL ring, thereby capping the opening of the GroEL channel. This chain is Co-chaperonin GroES, found in Fervidobacterium nodosum (strain ATCC 35602 / DSM 5306 / Rt17-B1).